The following is a 255-amino-acid chain: Electron transfer flavoprotein subunit beta (255 aa).

Ala-2 carries the post-translational modification N-acetylalanine. Residues Ala-9, 39 to 42, Cys-66, and 123 to 134 contribute to the AMP site; these read NPFC and GKQAIDDDCNQT. Positions 183–205 are recognition loop; it reads ADLRLNEPRYATLPNIMKAKKKK. Lys-200 is subject to N6,N6,N6-trimethyllysine; by ETFBKMT; alternate. Lys-200 is modified (N6-acetyllysine; alternate). Lys-200 carries the post-translational modification N6-methyllysine; alternate. Position 203 is an N6,N6,N6-trimethyllysine; by ETFBKMT (Lys-203). An N6-acetyllysine; alternate modification is found at Lys-210. Lys-210 carries the post-translational modification N6-succinyllysine; alternate. 2 positions are modified to phosphoserine: Ser-223 and Ser-226. Lys-238 carries the post-translational modification N6-acetyllysine. An N6-acetyllysine; alternate modification is found at Lys-248. At Lys-248 the chain carries N6-succinyllysine; alternate.

Belongs to the ETF beta-subunit/FixA family. Heterodimer composed of ETFA and ETFB. Identified in a complex that contains ETFA, ETFB and ETFRF1. Interacts with ACADM. Methylated. Trimethylation at Lys-200 and Lys-203 may negatively regulate the activity in electron transfer from acyl-CoA dehydrogenases.

It is found in the mitochondrion matrix. Heterodimeric electron transfer flavoprotein that accepts electrons from several mitochondrial dehydrogenases, including acyl-CoA dehydrogenases, glutaryl-CoA and sarcosine dehydrogenase. It transfers the electrons to the main mitochondrial respiratory chain via ETF-ubiquinone oxidoreductase. Required for normal mitochondrial fatty acid oxidation and normal amino acid metabolism. ETFB binds an AMP molecule that probably has a purely structural role. In Pongo abelii (Sumatran orangutan), this protein is Electron transfer flavoprotein subunit beta.